A 256-amino-acid polypeptide reads, in one-letter code: Acetyl-coenzyme A carboxylase carboxyl transferase subunit beta 2 (256 aa).

Residues 1-256 (MTVKCNKCKE…LAIHAETVSA (256 aa)) enclose the CoA carboxyltransferase N-terminal domain. Zn(2+) is bound by residues C5, C8, C24, and C27. The C4-type zinc-finger motif lies at 5-27 (CNKCKEEINKEDLEKNYYICPLC).

It belongs to the AccD/PCCB family. As to quaternary structure, acetyl-CoA carboxylase is a heterohexamer composed of biotin carboxyl carrier protein (AccB), biotin carboxylase (AccC) and two subunits each of ACCase subunit alpha (AccA) and ACCase subunit beta (AccD). Zn(2+) is required as a cofactor.

The protein localises to the cytoplasm. The catalysed reaction is N(6)-carboxybiotinyl-L-lysyl-[protein] + acetyl-CoA = N(6)-biotinyl-L-lysyl-[protein] + malonyl-CoA. The protein operates within lipid metabolism; malonyl-CoA biosynthesis; malonyl-CoA from acetyl-CoA: step 1/1. In terms of biological role, component of the acetyl coenzyme A carboxylase (ACC) complex. Biotin carboxylase (BC) catalyzes the carboxylation of biotin on its carrier protein (BCCP) and then the CO(2) group is transferred by the transcarboxylase to acetyl-CoA to form malonyl-CoA. This chain is Acetyl-coenzyme A carboxylase carboxyl transferase subunit beta 2, found in Lachnospira eligens (strain ATCC 27750 / DSM 3376 / VPI C15-48 / C15-B4) (Eubacterium eligens).